A 251-amino-acid chain; its full sequence is Arginine and glutamate-rich protein 1-A (251 aa).

Residues M1–G48 show a composition bias toward basic residues. Residues M1–R53 are necessary and sufficient for RNA binding. 2 disordered regions span residues M1–R92 and R215–E251. 3 stretches are compositionally biased toward basic and acidic residues: residues S49–M63, R71–R92, and R215–K231. The segment at G54–E251 is necessary and sufficient for transcriptional regulation.

This sequence belongs to the ARGLU1 family.

The protein localises to the nucleus. The protein resides in the nucleus speckle. Its subcellular location is the chromosome. Its function is as follows. Dual function regulator of gene expression; regulator of transcription and modulator of alternative splicing. General coactivator of nuclear receptor-induced gene expression. In Danio rerio (Zebrafish), this protein is Arginine and glutamate-rich protein 1-A (arglu1a).